The following is a 369-amino-acid chain: Flagellar P-ring protein (369 aa).

The first 22 residues, 1–22 (MFNARRLIAATLLMSCAFGAHA), serve as a signal peptide directing secretion.

Belongs to the FlgI family. In terms of assembly, the basal body constitutes a major portion of the flagellar organelle and consists of four rings (L,P,S, and M) mounted on a central rod.

It localises to the periplasm. The protein localises to the bacterial flagellum basal body. In terms of biological role, assembles around the rod to form the L-ring and probably protects the motor/basal body from shearing forces during rotation. The sequence is that of Flagellar P-ring protein from Pseudomonas entomophila (strain L48).